The following is a 492-amino-acid chain: NAD(P)H-quinone oxidoreductase subunit 2 A, chloroplastic (492 aa).

13 consecutive transmembrane segments (helical) span residues Leu-6 to Leu-26, Thr-39 to Phe-59, Val-81 to Ile-101, Met-106 to Cys-126, Leu-131 to Tyr-151, Tyr-165 to Gly-185, Pro-209 to Ala-229, Trp-277 to Ile-297, Met-305 to Asp-325, Gly-329 to Ala-349, Ala-377 to Phe-397, Leu-400 to Leu-420, and Met-466 to Ile-486.

Belongs to the complex I subunit 2 family. In terms of assembly, NDH is composed of at least 16 different subunits, 5 of which are encoded in the nucleus.

It localises to the plastid. The protein resides in the chloroplast thylakoid membrane. The catalysed reaction is a plastoquinone + NADH + (n+1) H(+)(in) = a plastoquinol + NAD(+) + n H(+)(out). It carries out the reaction a plastoquinone + NADPH + (n+1) H(+)(in) = a plastoquinol + NADP(+) + n H(+)(out). Functionally, NDH shuttles electrons from NAD(P)H:plastoquinone, via FMN and iron-sulfur (Fe-S) centers, to quinones in the photosynthetic chain and possibly in a chloroplast respiratory chain. The immediate electron acceptor for the enzyme in this species is believed to be plastoquinone. Couples the redox reaction to proton translocation, and thus conserves the redox energy in a proton gradient. This is NAD(P)H-quinone oxidoreductase subunit 2 A, chloroplastic from Illicium oligandrum (Star anise).